The chain runs to 174 residues: Xanthine-guanine phosphoribosyltransferase (174 aa).

5-phospho-alpha-D-ribose 1-diphosphate contacts are provided by residues 49-50 (RG) and 108-116 (DDLVDTGAT). Residue D109 coordinates Mg(2+). The guanine site is built by D112 and I155. D112 and I155 together coordinate xanthine. GMP-binding positions include 112 to 116 (DTGAT) and 154 to 155 (WI).

It belongs to the purine/pyrimidine phosphoribosyltransferase family. XGPT subfamily. Homotetramer. Mg(2+) is required as a cofactor.

It localises to the cell inner membrane. It carries out the reaction GMP + diphosphate = guanine + 5-phospho-alpha-D-ribose 1-diphosphate. It catalyses the reaction XMP + diphosphate = xanthine + 5-phospho-alpha-D-ribose 1-diphosphate. The catalysed reaction is IMP + diphosphate = hypoxanthine + 5-phospho-alpha-D-ribose 1-diphosphate. The protein operates within purine metabolism; GMP biosynthesis via salvage pathway; GMP from guanine: step 1/1. It participates in purine metabolism; XMP biosynthesis via salvage pathway; XMP from xanthine: step 1/1. Functionally, purine salvage pathway enzyme that catalyzes the transfer of the ribosyl-5-phosphate group from 5-phospho-alpha-D-ribose 1-diphosphate (PRPP) to the N9 position of the 6-oxopurines guanine and xanthine to form the corresponding ribonucleotides GMP (guanosine 5'-monophosphate) and XMP (xanthosine 5'-monophosphate), with the release of PPi. To a lesser extent, also acts on hypoxanthine. In Rhodopseudomonas palustris (strain BisB18), this protein is Xanthine-guanine phosphoribosyltransferase.